The primary structure comprises 183 residues: Ribosome rescue factor SmrB (183 aa).

The region spanning 98 to 173 is the Smr domain; the sequence is LDLHGLTQLQ…GDAALLVLIE (76 aa).

Belongs to the SmrB family. In terms of assembly, associates with collided ribosomes, but not with correctly translating polysomes.

In terms of biological role, acts as a ribosome collision sensor. Detects stalled/collided disomes (pairs of ribosomes where the leading ribosome is stalled and a second ribosome has collided with it) and endonucleolytically cleaves mRNA at the 5' boundary of the stalled ribosome. Stalled/collided disomes form a new interface (primarily via the 30S subunits) that binds SmrB. Cleaved mRNA becomes available for tmRNA ligation, leading to ribosomal subunit dissociation and rescue of stalled ribosomes. The sequence is that of Ribosome rescue factor SmrB from Escherichia fergusonii (strain ATCC 35469 / DSM 13698 / CCUG 18766 / IAM 14443 / JCM 21226 / LMG 7866 / NBRC 102419 / NCTC 12128 / CDC 0568-73).